The following is a 146-amino-acid chain: Large ribosomal subunit protein uL15 (146 aa).

The span at 1 to 13 shows a compositional bias: basic and acidic residues; sequence MKLHELKPAEGSR. The segment at 1–52 is disordered; the sequence is MKLHELKPAEGSRKVRNRVGRGIGSGNGKTAGKGHKGQNARSGGGVRLGFEG. Composition is skewed to gly residues over residues 21–31 and 42–52; these read RGIGSGNGKTA and SGGGVRLGFEG.

Belongs to the universal ribosomal protein uL15 family. Part of the 50S ribosomal subunit.

Functionally, binds to the 23S rRNA. The protein is Large ribosomal subunit protein uL15 of Bacillus anthracis (strain A0248).